The chain runs to 1196 residues: DNA-directed RNA polymerase I subunit RPA2 (1196 aa).

A C4-type zinc finger spans residues 1097-1124 (CRECGSILTTQSSVPKIGSMVTIRCRRC).

This sequence belongs to the RNA polymerase beta chain family. Component of the RNA polymerase I (Pol I) complex consisting of 14 subunits.

It localises to the nucleus. Its subcellular location is the nucleolus. The enzyme catalyses RNA(n) + a ribonucleoside 5'-triphosphate = RNA(n+1) + diphosphate. Its function is as follows. DNA-dependent RNA polymerase catalyzes the transcription of DNA into RNA using the four ribonucleoside triphosphates as substrates. Second largest core component of RNA polymerase I which synthesizes ribosomal RNA precursors. Proposed to contribute to the polymerase catalytic activity and forms the polymerase active center together with the largest subunit. Pol I is composed of mobile elements and RPA2 is part of the core element with the central large cleft and probably a clamp element that moves to open and close the cleft. The protein is DNA-directed RNA polymerase I subunit RPA2 (RPA2) of Eremothecium gossypii (strain ATCC 10895 / CBS 109.51 / FGSC 9923 / NRRL Y-1056) (Yeast).